Here is a 132-residue protein sequence, read N- to C-terminus: Protein p15 (132 aa).

May play a role in infectivity. The polypeptide is Protein p15 (Panicum mosaic virus (strain United States/Kansas 109S) (PMV)).